Consider the following 246-residue polypeptide: Small ribosomal subunit protein uS2 (246 aa).

It belongs to the universal ribosomal protein uS2 family.

The chain is Small ribosomal subunit protein uS2 from Burkholderia thailandensis (strain ATCC 700388 / DSM 13276 / CCUG 48851 / CIP 106301 / E264).